A 294-amino-acid polypeptide reads, in one-letter code: Cell division protein FtsQ (294 aa).

Over 1–26 (MARGPNRRRVDRVPGERRRRLARAMA) the chain is Cytoplasmic. A helical transmembrane segment spans residues 27–49 (LALPSILALAALGGAATLGWRVG). The Periplasmic portion of the chain corresponds to 50–294 (WKSDLLRVRE…GPQGRSSSLR (245 aa)). One can recognise a POTRA domain in the interval 55–123 (LRVREIRFEG…PALEVQLAER (69 aa)). A disordered region spans residues 266 to 294 (AGRRGEPDGRSSYAAGGGGGPQGRSSSLR).

Belongs to the FtsQ/DivIB family. FtsQ subfamily.

The protein localises to the cell inner membrane. In terms of biological role, essential cell division protein. The sequence is that of Cell division protein FtsQ from Anaeromyxobacter sp. (strain K).